The chain runs to 176 residues: Cathelicidin-2 (176 aa).

A signal peptide spans 1-29 (METQRASLSLGRCSLWLLLLGLVLPSASA). Glutamine 30 bears the Pyrrolidone carboxylic acid mark. Residues 30–130 (QALSYREAVL…DINCNELQSV (101 aa)) constitute a propeptide that is removed on maturation. 2 cysteine pairs are disulfide-bonded: cysteine 85/cysteine 96 and cysteine 107/cysteine 124. The disordered stretch occupies residues 157 to 176 (IFPPIRPPFRPPLGPFPGRR). Residue proline 173 is modified to Proline amide. A propeptide spans 174–176 (GRR) (removed in mature form).

It belongs to the cathelicidin family. Post-translationally, elastase is responsible for its maturation. As to expression, large granules of neutrophils.

It is found in the secreted. Its function is as follows. Exerts, in vitro, a potent antimicrobial activity. Probably due to an impairment of the function of the respiratory chain and of energy-dependent activities in the inner membrane of susceptible microorganisms. This is Cathelicidin-2 (CATHL2) from Bos taurus (Bovine).